Reading from the N-terminus, the 1217-residue chain is Myosin-1 (1217 aa).

The interval 1 to 26 (MAILKRTNRAKAATAAAPNSTGKSNG) is disordered. Residues 10 to 19 (AKAATAAAPN) show a composition bias toward low complexity. Residues 17–24 (APNSTGKS) and 133–140 (GESGAGKT) each bind ATP. A Myosin motor domain is found at 40–720 (VGVDDLTLLS…TLFALEDMRD (681 aa)). S361 bears the Phosphoserine mark. At Y363 the chain carries Phosphotyrosine. Positions 409–491 (SIGILDIYGF…PGLFAAMNDA (83 aa)) are actin-binding. 2 IQ domains span residues 724-744 (DTMATRIQRAWRSYVRRRSEA) and 745-770 (AACIQKLWNRNKVNMELERVRNEGTK). S742 carries the post-translational modification Phosphoserine. One can recognise a TH1 domain in the interval 778–964 (RRRYSILGSR…TIHVGTGLPP (187 aa)). Phosphoserine is present on S782. A disordered region spans residues 961–1105 (GLPPTSKSKP…PPPPPPPAEV (145 aa)). A compositionally biased stretch (low complexity) spans 998-1013 (KPVSMPAAKSKPAPMA). Positions 1015-1025 (PVSTAQQTQNR) are enriched in polar residues. Low complexity predominate over residues 1045-1075 (TSTTTTIKQATTVSASKPAPSTVTSAASSPS). The span at 1076-1088 (NISKPSAPVANNV) shows a compositional bias: polar residues. Residues 1093 to 1103 (AVPPPPPPPPA) are compositionally biased toward pro residues. The region spanning 1106–1165 (EKKDLYLALYDFAGRSPNEMTIKKDEIIEIVQKEPSGWWLALKNGAEGWVPATYVTEYKG) is the SH3 domain. S1211 is subject to Phosphoserine.

Belongs to the TRAFAC class myosin-kinesin ATPase superfamily. Myosin family. In terms of assembly, interacts with cam2. Interacts (via SH3 domain) with vrp1. Post-translationally, phosphorylation of the TEDS site (Ser-361) is required for the polarization of the actin cytoskeleton. Phosphorylation probably activates the myosin-I ATPase activity.

Its subcellular location is the cytoplasm. It is found in the cytoskeleton. It localises to the actin patch. Its function is as follows. Type-I myosin implicated in the organization of the actin cytoskeleton. Required for proper actin cytoskeleton polarization. At the cell cortex, assembles in patch-like structures together with proteins from the actin-polymerizing machinery and promotes actin assembly. Functions as actin nucleation-promoting factor (NPF) for the Arp2/3 complex. Contributes to proper septation by transporting vesicles containing septal material to the division site and is involved in the formation of sterol-rich membrane domains at the cell division site. Required also for mating. In Schizosaccharomyces pombe (strain 972 / ATCC 24843) (Fission yeast), this protein is Myosin-1 (myo1).